The sequence spans 224 residues: Cytidylate kinase (224 aa).

11 to 19 (GPAAAGKST) contacts ATP.

The protein belongs to the cytidylate kinase family. Type 1 subfamily.

It is found in the cytoplasm. It carries out the reaction CMP + ATP = CDP + ADP. The catalysed reaction is dCMP + ATP = dCDP + ADP. This Listeria innocua serovar 6a (strain ATCC BAA-680 / CLIP 11262) protein is Cytidylate kinase.